The chain runs to 37 residues: Cytochrome b6-f complex subunit 5 (37 aa).

Residues 5–25 (LLSGIVLGLVPITITGLLVTA) form a helical membrane-spanning segment.

Belongs to the PetG family. The 4 large subunits of the cytochrome b6-f complex are cytochrome b6, subunit IV (17 kDa polypeptide, PetD), cytochrome f and the Rieske protein, while the 4 small subunits are PetG, PetL, PetM and PetN. The complex functions as a dimer.

Its subcellular location is the plastid. It localises to the chloroplast thylakoid membrane. In terms of biological role, component of the cytochrome b6-f complex, which mediates electron transfer between photosystem II (PSII) and photosystem I (PSI), cyclic electron flow around PSI, and state transitions. PetG is required for either the stability or assembly of the cytochrome b6-f complex. The chain is Cytochrome b6-f complex subunit 5 from Tupiella akineta (Green alga).